A 391-amino-acid polypeptide reads, in one-letter code: Large ribosomal subunit protein uL3 (391 aa).

Residues 1-10 are compositionally biased toward basic and acidic residues; sequence MSHRKFEAPR. Residues 1–41 form a disordered region; it reads MSHRKFEAPRHGSLGFRPRRRTRHHRGRCRSFPKDDPSKKP. A compositionally biased stretch (basic residues) spans 17-31; it reads RPRRRTRHHRGRCRS.

This sequence belongs to the universal ribosomal protein uL3 family.

The protein resides in the cytoplasm. The L3 protein is a component of the large subunit of cytoplasmic ribosomes. The sequence is that of Large ribosomal subunit protein uL3 (RPL3) from Tetrahymena thermophila.